The chain runs to 378 residues: 4-hydroxy-3-methylbut-2-en-1-yl diphosphate synthase (flavodoxin) (378 aa).

The [4Fe-4S] cluster site is built by C268, C271, C303, and E310.

It belongs to the IspG family. It depends on [4Fe-4S] cluster as a cofactor.

It carries out the reaction (2E)-4-hydroxy-3-methylbut-2-enyl diphosphate + oxidized [flavodoxin] + H2O + 2 H(+) = 2-C-methyl-D-erythritol 2,4-cyclic diphosphate + reduced [flavodoxin]. It participates in isoprenoid biosynthesis; isopentenyl diphosphate biosynthesis via DXP pathway; isopentenyl diphosphate from 1-deoxy-D-xylulose 5-phosphate: step 5/6. Its function is as follows. Converts 2C-methyl-D-erythritol 2,4-cyclodiphosphate (ME-2,4cPP) into 1-hydroxy-2-methyl-2-(E)-butenyl 4-diphosphate. In Corynebacterium glutamicum (strain ATCC 13032 / DSM 20300 / JCM 1318 / BCRC 11384 / CCUG 27702 / LMG 3730 / NBRC 12168 / NCIMB 10025 / NRRL B-2784 / 534), this protein is 4-hydroxy-3-methylbut-2-en-1-yl diphosphate synthase (flavodoxin).